Consider the following 711-residue polypeptide: Hepatocyte growth factor-like protein (711 aa).

The first 18 residues, 1–18 (MGWLPLLLLLTQCLGVPG), serve as a signal peptide directing secretion. Positions 21-105 (SPLNDFQVLR…GRCDLFQKKD (85 aa)) constitute a PAN domain. Cystine bridges form between Cys56-Cys78, Cys60-Cys66, Cys110-Cys186, Cys131-Cys169, Cys157-Cys181, Cys191-Cys268, Cys194-Cys324, Cys212-Cys251, Cys240-Cys263, Cys283-Cys361, Cys304-Cys343, Cys332-Cys355, Cys370-Cys448, Cys391-Cys431, Cys419-Cys443, Cys468-Cys588, Cys507-Cys523, Cys602-Cys667, Cys632-Cys646, and Cys657-Cys685. Asn72 is a glycosylation site (N-linked (GlcNAc...) asparagine). 4 consecutive Kringle domains span residues 110–186 (CIMN…IKSC), 191–268 (CVWC…LPRC), 283–361 (CFRG…IRRC), and 370–448 (CYHG…LRRC). Residue Asn296 is glycosylated (N-linked (GlcNAc...) asparagine). The Peptidase S1 domain maps to 484–709 (VVGGHPGNSP…FVDWIHKVMR (226 aa)). A glycan (N-linked (GlcNAc...) asparagine) is linked at Asn615.

This sequence belongs to the peptidase S1 family. Plasminogen subfamily. Dimer of an alpha chain and a beta chain linked by a disulfide bond. Interacts (via beta chain) with MST1R (via SEMA domain). Post-translationally, cleaved after Arg-483, probably by HPN/Hepsin, to yield the active form consisting of two disulfide-linked chains.

It localises to the secreted. The polypeptide is Hepatocyte growth factor-like protein (MST1) (Homo sapiens (Human)).